A 409-amino-acid chain; its full sequence is Elongation factor Tu (409 aa).

A tr-type G domain is found at 10–214 (KPHLNIGTIG…AVDSFIPTPE (205 aa)). The G1 stretch occupies residues 19-26 (GHVDHGKT). 19–26 (GHVDHGKT) lines the GTP pocket. Thr-26 provides a ligand contact to Mg(2+). Positions 60–64 (GITIN) are G2. The interval 81–84 (DCPG) is G3. GTP-binding positions include 81–85 (DCPGH) and 136–139 (NKED). The segment at 136 to 139 (NKED) is G4. The interval 174 to 176 (SGL) is G5.

It belongs to the TRAFAC class translation factor GTPase superfamily. Classic translation factor GTPase family. EF-Tu/EF-1A subfamily. As to quaternary structure, monomer.

It is found in the cytoplasm. It catalyses the reaction GTP + H2O = GDP + phosphate + H(+). Its function is as follows. GTP hydrolase that promotes the GTP-dependent binding of aminoacyl-tRNA to the A-site of ribosomes during protein biosynthesis. The sequence is that of Elongation factor Tu from Nostoc punctiforme (strain ATCC 29133 / PCC 73102).